Here is a 586-residue protein sequence, read N- to C-terminus: Proline--tRNA ligase (586 aa).

This sequence belongs to the class-II aminoacyl-tRNA synthetase family. ProS type 1 subfamily. In terms of assembly, homodimer.

The protein localises to the cytoplasm. The catalysed reaction is tRNA(Pro) + L-proline + ATP = L-prolyl-tRNA(Pro) + AMP + diphosphate. Catalyzes the attachment of proline to tRNA(Pro) in a two-step reaction: proline is first activated by ATP to form Pro-AMP and then transferred to the acceptor end of tRNA(Pro). As ProRS can inadvertently accommodate and process non-cognate amino acids such as alanine and cysteine, to avoid such errors it has two additional distinct editing activities against alanine. One activity is designated as 'pretransfer' editing and involves the tRNA(Pro)-independent hydrolysis of activated Ala-AMP. The other activity is designated 'posttransfer' editing and involves deacylation of mischarged Ala-tRNA(Pro). The misacylated Cys-tRNA(Pro) is not edited by ProRS. The chain is Proline--tRNA ligase from Kineococcus radiotolerans (strain ATCC BAA-149 / DSM 14245 / SRS30216).